Reading from the N-terminus, the 316-residue chain is Porphobilinogen deaminase (316 aa).

The residue at position 249 (Cys-249) is an S-(dipyrrolylmethanemethyl)cysteine.

This sequence belongs to the HMBS family. In terms of assembly, monomer. Dipyrromethane serves as cofactor.

It carries out the reaction 4 porphobilinogen + H2O = hydroxymethylbilane + 4 NH4(+). Its pathway is porphyrin-containing compound metabolism; protoporphyrin-IX biosynthesis; coproporphyrinogen-III from 5-aminolevulinate: step 2/4. Functionally, tetrapolymerization of the monopyrrole PBG into the hydroxymethylbilane pre-uroporphyrinogen in several discrete steps. The sequence is that of Porphobilinogen deaminase from Nitrobacter hamburgensis (strain DSM 10229 / NCIMB 13809 / X14).